Here is a 31-residue protein sequence, read N- to C-terminus: Cytochrome b6-f complex subunit 8 (31 aa).

A helical transmembrane segment spans residues 5–25 (IVSLAWAALMVVFTFSLSLVV).

It belongs to the PetN family. As to quaternary structure, the 4 large subunits of the cytochrome b6-f complex are cytochrome b6, subunit IV (17 kDa polypeptide, PetD), cytochrome f and the Rieske protein, while the 4 small subunits are PetG, PetL, PetM and PetN. The complex functions as a dimer.

It is found in the plastid. It localises to the chloroplast thylakoid membrane. Its function is as follows. Component of the cytochrome b6-f complex, which mediates electron transfer between photosystem II (PSII) and photosystem I (PSI), cyclic electron flow around PSI, and state transitions. The chain is Cytochrome b6-f complex subunit 8 from Acorus calamus (Sweet flag).